A 138-amino-acid polypeptide reads, in one-letter code: HTH-type transcriptional regulator CymR (138 aa).

An HTH rrf2-type domain is found at 2-125 (KISTKGRYGL…DSTTLEDLAS (124 aa)). Residues 28–51 (LKSIAQTNNLSEHYLEQLVSPLRN) constitute a DNA-binding region (H-T-H motif).

In terms of assembly, homodimer. Forms homotetramers at higher concentrations of protein. Forms CymR(2):CysK(2) or CymR(4):CysK(4) complexes in the absence of O-acetylserine.

Functionally, master repressor of cysteine metabolism in B.subtilis. Controls the expression of genes involved either in cysteine synthesis from sulfide (cysK), sulfonates (ssu), or methionine (mccAB) or in cystine uptake (tcyP). Activity of CymR is positively regulated by CysK in response to cysteine availability. When cysteine is present, the pool of O-acetylserine (OAS) is low, which leads to the formation of a CymR-CysK complex and transcriptional repression of the CymR regulon occurs. In the absence of cysteine, the OAS pool is high and the CymR-CysK complex is mostly dissociated, leading to a faster dissociation of CymR from its DNA targets and the lifting of CymR-dependent repression. The polypeptide is HTH-type transcriptional regulator CymR (cymR) (Bacillus subtilis (strain 168)).